Consider the following 307-residue polypeptide: N-myc-interactor (307 aa).

The tract at residues 1 to 24 (MEADKDDTQQILKEHSPDEFIKDE) is disordered. Position 16 is a phosphoserine (S16). K22 is covalently cross-linked (Glycyl lysine isopeptide (Lys-Gly) (interchain with G-Cter in ubiquitin)). A coiled-coil region spans residues 30–64 (IDEITKKNIQLKKEIQKLETELQEATKEFQIKEDI). NID domains follow at residues 103–192 (GQAL…GEVD) and 201–292 (GSAV…EVDV).

It belongs to the NMI family. Interacts with MYCN and MYC, as well as with other transcription factors with a Zip, HLH or a HLH-Zip motif. Interacts with all STAT proteins except STAT2. Interacts with IRF7, the interaction is direct and leads to the inhibition of IRF7-mediated type I IFN production. Interacts (via coiled-coil domain) with TRIM21 (via the SPRY domain); the interaction leads to 'Lys-63'-linked ubiquitination of NMI. Interacts with IFI35; the interaction is direct and is facilitated by TRIM21. Interacts with TLR4; the interaction is direct and leads to NF-kappa-B activation. As to quaternary structure, (Microbial infection) Interacts with human cytomegalovirus protein UL23; this interaction inhibits NMI-mediated transcription of interferon-gamma stimulated genes. Post-translationally, ubiquitinated. 'Lys-63'-linked ubiquitination by TRIM21 promotes interaction with IFI35 and inhibits virus-triggered type I IFN-beta production. Expressed in adult spleen, liver, and kidney. Expressed in fetal thymus, liver, placenta, spleen, lung, and kidney but not brain. Expressed in macrophages.

The protein resides in the cytoplasm. It is found in the nucleus. Its subcellular location is the secreted. Acts as a signaling pathway regulator involved in innate immune system response. In response to interleukin 2/IL2 and interferon IFN-gamma/IFNG, interacts with signal transducer and activator of transcription/STAT which activate the transcription of downstream genes involved in a multitude of signals for development and homeostasis. Enhances the recruitment of CBP/p300 coactivators to STAT1 and STAT5, resulting in increased STAT1- and STAT5-dependent transcription. In response to interferon IFN-alpha, associates in a complex with signaling pathway regulator IFI35 to regulate immune response; the complex formation prevents proteasome-mediated degradation of IFI35. In complex with IFI35, inhibits virus-triggered type I IFN-beta production when ubiquitinated by ubiquitin-protein ligase TRIM21. In complex with IFI35, negatively regulates nuclear factor NF-kappa-B signaling by inhibiting the nuclear translocation, activation and transcription of NF-kappa-B subunit p65/RELA, resulting in the inhibition of endothelial cell proliferation, migration and re-endothelialization of injured arteries. Negatively regulates virus-triggered type I interferon/IFN production by inducing proteosome-dependent degradation of IRF7, a transcriptional regulator of type I IFN, thereby interfering with cellular antiviral responses. Beside its role as an intracellular signaling pathway regulator, also functions extracellularly as damage-associated molecular patterns (DAMPs) to promote inflammation, when actively released by macrophage to the extracellular space during cell injury or pathogen invasion. Macrophage-secreted NMI activates NF-kappa-B signaling in adjacent macrophages through Toll-like receptor 4/TLR4 binding and activation, thereby inducing NF-kappa-B translocation from the cytoplasm into the nucleus which promotes the release of pro-inflammatory cytokines. This chain is N-myc-interactor, found in Homo sapiens (Human).